We begin with the raw amino-acid sequence, 1107 residues long: Rho GTPase-activating protein 45 (1107 aa).

A disordered region spans residues 1–99; it reads MFSRKKRELM…SPPESGEGPF (99 aa). Over residues 37–55 the composition is skewed to low complexity; that stretch reads DSSNDLASSPPSNSSPVSS. Residues 56-66 show a composition bias toward polar residues; that stretch reads GTLKRPSSLSR. Coiled-coil stretches lie at residues 103-132 and 363-485; these read EDISQLLGDVARFAERLEKLRDVVQDEELK and NMRR…QSDQ. One can recognise an F-BAR domain in the interval 261-524; sequence EDVDVILQRS…SSKLYDLGQQ (264 aa). Composition is skewed to basic and acidic residues over residues 414–423, 434–444, and 573–588; these read NATRAEEEQS, RRAEEEAKNRA, and ENKEISGEERGVERRG. Disordered regions lie at residues 414 to 444 and 564 to 595; these read NATRAEEEQSHSGTRSLDKKRRAEEEAKNRA and FNSQDIPSSENKEISGEERGVERRGGRGHQVH. The Phorbol-ester/DAG-type zinc finger occupies 671–716; it reads THRLRKLRTPSKCRECNSYVYFQGAECEECSLACHKKCLETLAIQC. Positions 730–942 constitute a Rho-GAP domain; that stretch reads RDFSETALRS…TLIIFYSTIF (213 aa). The disordered stretch occupies residues 981–1036; the sequence is LTPEYQIPVFKEPGASTVESDSESDGAEDIPGTWKPQTTRGHLTKEASVTSAEDIP. Residues 1015-1031 show a composition bias toward polar residues; it reads KPQTTRGHLTKEASVTS.

The protein resides in the cytoplasm. The protein localises to the cell projection. Its subcellular location is the ruffle membrane. Its function is as follows. Contains a GTPase activator for the Rho-type GTPases (RhoGAP) domain that would be able to negatively regulate the actin cytoskeleton as well as cell spreading. However, also contains N-terminally a BAR-domin which is able to play an autoinhibitory effect on this RhoGAP activity. This Xenopus laevis (African clawed frog) protein is Rho GTPase-activating protein 45.